Consider the following 1433-residue polypeptide: DNA-directed RNA polymerase subunit beta' (1433 aa).

Zn(2+)-binding residues include C66, C68, C81, and C84. The tract at residues 328–347 (RKSSAVKTDSNRPLKSLSDS) is disordered. The span at 329–346 (KSSAVKTDSNRPLKSLSD) shows a compositional bias: polar residues. Mg(2+) is bound by residues D477, D479, and D481. Zn(2+) contacts are provided by C825, C899, C906, and C909.

It belongs to the RNA polymerase beta' chain family. As to quaternary structure, the RNAP catalytic core consists of 2 alpha, 1 beta, 1 beta' and 1 omega subunit. When a sigma factor is associated with the core the holoenzyme is formed, which can initiate transcription. Requires Mg(2+) as cofactor. It depends on Zn(2+) as a cofactor.

The enzyme catalyses RNA(n) + a ribonucleoside 5'-triphosphate = RNA(n+1) + diphosphate. Functionally, DNA-dependent RNA polymerase catalyzes the transcription of DNA into RNA using the four ribonucleoside triphosphates as substrates. The chain is DNA-directed RNA polymerase subunit beta' from Christiangramia forsetii (strain DSM 17595 / CGMCC 1.15422 / KT0803) (Gramella forsetii).